We begin with the raw amino-acid sequence, 243 residues long: Triosephosphate isomerase (243 aa).

Position 9–11 (9–11) interacts with substrate; sequence NWK. The active-site Electrophile is the histidine 96. Glutamate 165 functions as the Proton acceptor in the catalytic mechanism. Residues glycine 171, serine 204, and 225–226 each bind substrate; that span reads GG.

Belongs to the triosephosphate isomerase family. Homodimer.

Its subcellular location is the cytoplasm. It carries out the reaction D-glyceraldehyde 3-phosphate = dihydroxyacetone phosphate. It participates in carbohydrate biosynthesis; gluconeogenesis. The protein operates within carbohydrate degradation; glycolysis; D-glyceraldehyde 3-phosphate from glycerone phosphate: step 1/1. Its function is as follows. Involved in the gluconeogenesis. Catalyzes stereospecifically the conversion of dihydroxyacetone phosphate (DHAP) to D-glyceraldehyde-3-phosphate (G3P). In Synechococcus sp. (strain WH7803), this protein is Triosephosphate isomerase.